A 141-amino-acid polypeptide reads, in one-letter code: Endoribonuclease YbeY (141 aa).

Residues His100, His104, and His110 each contribute to the Zn(2+) site.

It belongs to the endoribonuclease YbeY family. It depends on Zn(2+) as a cofactor.

It localises to the cytoplasm. Functionally, single strand-specific metallo-endoribonuclease involved in late-stage 70S ribosome quality control and in maturation of the 3' terminus of the 16S rRNA. The polypeptide is Endoribonuclease YbeY (Helicobacter pylori (strain J99 / ATCC 700824) (Campylobacter pylori J99)).